Reading from the N-terminus, the 1129-residue chain is Protein LANA1 (1129 aa).

Disordered regions lie at residues 1-988 and 1110-1129; these read MAPP…PVPY and LPLTQPGENQGPGDSPQEMT. Composition is skewed to basic and acidic residues over residues 28–41 and 48–58; these read RSPERCDLGDDLHL and VADSVDGRECG. A compositionally biased stretch (pro residues) spans 85-104; that stretch reads PVAPIPSPAPATPLPPPALL. Positions 139–156 are enriched in polar residues; that stretch reads SPESSQRPPLSSPTGRPD. A compositionally biased stretch (pro residues) spans 161 to 185; sequence MRPPPSQQTTPPHSPTTPPPEPPSK. Residues 186–197 show a composition bias toward low complexity; that stretch reads SSPDSLAPSTLR. Residues 207-217 are compositionally biased toward polar residues; that stretch reads PQGPSTLNPIC. The span at 263 to 275 shows a compositional bias: low complexity; that stretch reads PISIGSSSPSEGS. Basic and acidic residues-rich tracts occupy residues 292 to 301 and 314 to 323; these read EASKNEKECS and EISKESQVDK. Positions 324 to 419 are enriched in acidic residues; it reads DDNDNKDDEE…DKKEDEEDGG (96 aa). The segment covering 431-471 has biased composition (low complexity); it reads QQQQEPQQQEPQQQEPQQQEPQQQEPQQQEPQQQEPQQQEP. Over residues 472-528 the composition is skewed to basic and acidic residues; it reads QQREPQQREPQQREPQQREPQQREPQQREPQQREPQQREPQQREPQQREPQQREPQQ. The segment covering 529-596 has biased composition (low complexity); it reads REPQQQEPQQ…QQQEPQQQDE (68 aa). The segment covering 597 to 888 has biased composition (acidic residues); it reads QQQDEQQQDE…QELEEVEEQE (292 aa). Positions 924 to 934 are enriched in polar residues; it reads THEQIASSPPG. Positions 962-979 are enriched in basic residues; that stretch reads PGVRMRRVPVTHPKKPHP. Residues 1008–1129 form a DNA-binding domain region; it reads FLGKDGRRDP…GPGDSPQEMT (122 aa).

In terms of assembly, homooligomer. Interacts with host BRD2. Interacts with host RELA, ELOB, ELOC and CUL5; these interactions induce the proteasomal degradation of host RELA. Interacts with host TRIM28 and NFE2L2/NRF2; these interactions are essential for the shutdown of lytic gene expression during the early stage of infection. Interacts (via N-terminus) with host histones H2A and H2B; these interactions are essential to dock LANA1 onto chromosomes. Interacts with host BUB1 and PCNA. Interacts with host NAP1L1; this interaction is required for LANA1-dependent DNA replication. Interacts with components of the host MLL1 complex KMT2A and WDR5.

The protein resides in the host nucleus. Multifunctional protein that plays a role in the replication and long-term persistence of the viral episomal genome in dividing cells. Binds to mitotic chromosomes via its N-terminal region and to a 16-bp imperfect palindrome within the origin of replication (oriP) located in the viral terminal repeat (TR) through its C-terminal. Tethers viral episomes to chromosomes during mitosis. Plays a critical role in the shutdown of lytic gene expression during the early stage of infection by interacting with host TRIM28. Also plays a role in the repression of host NF-kappa-B activity upon TNF-alpha stimulation by promoting the proteasomal degradation of host RELA. Promotes nuclear localization and cleavage of host STAT6 leading to constitutive activation of the IL13/STAT6 signaling pathway to promote viral latency. Interacts with and modulates the histone methyltransferase MLL1 complex activity, leading to its recruitment on viral DNA terminal repeats changing the dynamic of histone H3 methylated 'Lys-4'(H3K4me) profile during the initial hours following infection. The polypeptide is Protein LANA1 (LANA1) (Homo sapiens (Human)).